The chain runs to 217 residues: uncharacterized protein (217 aa).

This is an uncharacterized protein from Escherichia coli.